The chain runs to 404 residues: Cysteine desulfurase IscS (404 aa).

Pyridoxal 5'-phosphate-binding positions include 75 to 76, Asn-155, Gln-183, and 203 to 205; these read AT and SAH. N6-(pyridoxal phosphate)lysine is present on Lys-206. Residue Thr-243 coordinates pyridoxal 5'-phosphate. Cys-328 acts as the Cysteine persulfide intermediate in catalysis. A [2Fe-2S] cluster-binding site is contributed by Cys-328.

It belongs to the class-V pyridoxal-phosphate-dependent aminotransferase family. NifS/IscS subfamily. In terms of assembly, homodimer. Forms a heterotetramer with IscU, interacts with other sulfur acceptors. Pyridoxal 5'-phosphate is required as a cofactor.

It is found in the cytoplasm. It carries out the reaction (sulfur carrier)-H + L-cysteine = (sulfur carrier)-SH + L-alanine. Its pathway is cofactor biosynthesis; iron-sulfur cluster biosynthesis. Functionally, master enzyme that delivers sulfur to a number of partners involved in Fe-S cluster assembly, tRNA modification or cofactor biosynthesis. Catalyzes the removal of elemental sulfur atoms from cysteine to produce alanine. Functions as a sulfur delivery protein for Fe-S cluster synthesis onto IscU, an Fe-S scaffold assembly protein, as well as other S acceptor proteins. This Vesicomyosocius okutanii subsp. Calyptogena okutanii (strain HA) protein is Cysteine desulfurase IscS.